We begin with the raw amino-acid sequence, 1024 residues long: Beta-galactosidase (1024 aa).

Substrate contacts are provided by Asn-103 and Asp-202. Asp-202 lines the Na(+) pocket. Residues Glu-417, His-419, and Glu-462 each contribute to the Mg(2+) site. Residues Glu-462 and 538–541 (EYAH) each bind substrate. Glu-462 acts as the Proton donor in catalysis. Catalysis depends on Glu-538, which acts as the Nucleophile. Residue Asn-598 coordinates Mg(2+). Na(+) is bound by residues Phe-602 and Asn-605. Positions 605 and 1000 each coordinate substrate.

The protein belongs to the glycosyl hydrolase 2 family. As to quaternary structure, homotetramer. Mg(2+) serves as cofactor. Requires Na(+) as cofactor.

The enzyme catalyses Hydrolysis of terminal non-reducing beta-D-galactose residues in beta-D-galactosides.. The sequence is that of Beta-galactosidase from Escherichia coli O139:H28 (strain E24377A / ETEC).